The primary structure comprises 506 residues: Cobyric acid synthase (506 aa).

A GATase cobBQ-type domain is found at 251–448 (DITIAIVQLP…LHGLFDSDAF (198 aa)). Cys-332 (nucleophile) is an active-site residue. Residue His-440 is part of the active site.

The protein belongs to the CobB/CobQ family. CobQ subfamily.

It participates in cofactor biosynthesis; adenosylcobalamin biosynthesis. Functionally, catalyzes amidations at positions B, D, E, and G on adenosylcobyrinic A,C-diamide. NH(2) groups are provided by glutamine, and one molecule of ATP is hydrogenolyzed for each amidation. This Salmonella heidelberg (strain SL476) protein is Cobyric acid synthase.